The sequence spans 40 residues: Snaclec tokaracetin subunit beta (40 aa).

The cysteines at positions 2 and 13 are disulfide-linked. One can recognise a C-type lectin domain in the interval 9 to 40; sequence YDEHCYRVFQQKMNWEDAEKFCTQQHKGXHLX.

The protein belongs to the snaclec family. Heterodimer of subunits alpha and beta; disulfide-linked. In terms of tissue distribution, expressed by the venom gland.

The protein resides in the secreted. In terms of biological role, platelet antagonist that specifically and reversibly binds to a site on platelet glycoprotein Ibalpha (GP1BA) close to or identical with the site for vWF binding. It inhibits the binding of vWF to platelets and vWF-dependent shear-induced platelet aggregation. In Protobothrops tokarensis (Tokara habu), this protein is Snaclec tokaracetin subunit beta.